The sequence spans 722 residues: Polyribonucleotide nucleotidyltransferase (722 aa).

Residues Asp-495 and Asp-501 each contribute to the Mg(2+) site. One can recognise a KH domain in the interval 562–621 (PRLLSFRIDPELIGTVIGPGGRTIKGITERTNTKIDIEDGGIVTIASHDGVAAEEAQKII). The region spanning 631–699 (GEVFTGSITR…NRGRINLTLR (69 aa)) is the S1 motif domain.

Belongs to the polyribonucleotide nucleotidyltransferase family. The cofactor is Mg(2+).

The protein localises to the cytoplasm. It carries out the reaction RNA(n+1) + phosphate = RNA(n) + a ribonucleoside 5'-diphosphate. Involved in mRNA degradation. Catalyzes the phosphorolysis of single-stranded polyribonucleotides processively in the 3'- to 5'-direction. The sequence is that of Polyribonucleotide nucleotidyltransferase from Prochlorococcus marinus (strain SARG / CCMP1375 / SS120).